The following is a 357-amino-acid chain: MTDRNISLTYAGAGVDIDAGNRLVDLIKPMVRATARAGAEAEIGGFGGLFDLKAAGFADPVLVAANDGVGTKVKIAIETGIHDTIGIDLVAMSVNDLVVQGAEPLFFLDYFACGKLDPETAAAIVAGIAEGCREAGCALIGGETAEMPGLYKDGDYDLAGFAVGAAERGSLLPGRDIAAGDAVIGLASSGVHSNGYSLVRNIVEASGIALSAPAPFAPVATLGGALLTPTRLYVKSCLRAIRETGAVKGLAHITGGGFTDNIPRVLPEGLGVRIDLAGLTVLPVFKWLAQQGRVVEREMLRTFNCGIGMVAIVRRDAVQQVVDVLTQAGERVSLLGDVIVAGDEGRVVYDGQLDLAV.

This sequence belongs to the AIR synthase family.

The protein localises to the cytoplasm. The catalysed reaction is 2-formamido-N(1)-(5-O-phospho-beta-D-ribosyl)acetamidine + ATP = 5-amino-1-(5-phospho-beta-D-ribosyl)imidazole + ADP + phosphate + H(+). It functions in the pathway purine metabolism; IMP biosynthesis via de novo pathway; 5-amino-1-(5-phospho-D-ribosyl)imidazole from N(2)-formyl-N(1)-(5-phospho-D-ribosyl)glycinamide: step 2/2. This Nitrobacter winogradskyi (strain ATCC 25391 / DSM 10237 / CIP 104748 / NCIMB 11846 / Nb-255) protein is Phosphoribosylformylglycinamidine cyclo-ligase.